The primary structure comprises 125 residues: Large ribosomal subunit protein uL24 (125 aa).

The protein belongs to the universal ribosomal protein uL24 family. As to quaternary structure, part of the 50S ribosomal subunit.

Its function is as follows. One of two assembly initiator proteins, it binds directly to the 5'-end of the 23S rRNA, where it nucleates assembly of the 50S subunit. In terms of biological role, one of the proteins that surrounds the polypeptide exit tunnel on the outside of the subunit. The sequence is that of Large ribosomal subunit protein uL24 from Mycoplasma mobile (strain ATCC 43663 / 163K / NCTC 11711) (Mesomycoplasma mobile).